An 88-amino-acid chain; its full sequence is HssA/B-like protein 6 (88 aa).

The interval 1 to 22 is disordered; the sequence is MSILSALTSISNPMKSSNSNVA.

This sequence belongs to the hssA/B family.

The polypeptide is HssA/B-like protein 6 (hssl6) (Dictyostelium discoideum (Social amoeba)).